A 295-amino-acid chain; its full sequence is Elongation factor Ts (295 aa).

Positions 79–82 are involved in Mg(2+) ion dislocation from EF-Tu; that stretch reads TDFV.

The protein belongs to the EF-Ts family.

The protein localises to the cytoplasm. Its function is as follows. Associates with the EF-Tu.GDP complex and induces the exchange of GDP to GTP. It remains bound to the aminoacyl-tRNA.EF-Tu.GTP complex up to the GTP hydrolysis stage on the ribosome. The polypeptide is Elongation factor Ts (Bacillus cereus (strain G9842)).